We begin with the raw amino-acid sequence, 387 residues long: Cysteine desulfurase (387 aa).

Residues G72–T73, N152, Q180, and S200–H202 each bind pyridoxal 5'-phosphate. Position 203 is an N6-(pyridoxal phosphate)lysine (K203). T238 provides a ligand contact to pyridoxal 5'-phosphate. The active-site Cysteine persulfide intermediate is C323. C323 contributes to the [2Fe-2S] cluster binding site.

Belongs to the class-V pyridoxal-phosphate-dependent aminotransferase family. NifS/IscS subfamily. Homodimer. Pyridoxal 5'-phosphate serves as cofactor.

The enzyme catalyses (sulfur carrier)-H + L-cysteine = (sulfur carrier)-SH + L-alanine. Catalyzes the removal of elemental sulfur atoms from cysteine to produce alanine. Seems to participate in the biosynthesis of the nitrogenase metalloclusters by providing the inorganic sulfur required for the Fe-S core formation. In Cereibacter sphaeroides (Rhodobacter sphaeroides), this protein is Cysteine desulfurase.